We begin with the raw amino-acid sequence, 230 residues long: 7-cyano-7-deazaguanine synthase (230 aa).

Residue 9–19 (LSGGLDSATTA) coordinates ATP. Zn(2+) is bound by residues C190, C198, C201, and C204.

It belongs to the QueC family. Zn(2+) serves as cofactor.

The catalysed reaction is 7-carboxy-7-deazaguanine + NH4(+) + ATP = 7-cyano-7-deazaguanine + ADP + phosphate + H2O + H(+). Its pathway is purine metabolism; 7-cyano-7-deazaguanine biosynthesis. Its function is as follows. Catalyzes the ATP-dependent conversion of 7-carboxy-7-deazaguanine (CDG) to 7-cyano-7-deazaguanine (preQ(0)). This chain is 7-cyano-7-deazaguanine synthase, found in Microcystis aeruginosa (strain NIES-843 / IAM M-2473).